The chain runs to 338 residues: Glycerol-3-phosphate dehydrogenase [NAD(P)+] (338 aa).

The NADPH site is built by Ser13, Trp14, and Lys108. Lys108, Gly139, and Ser141 together coordinate sn-glycerol 3-phosphate. Ala143 contributes to the NADPH binding site. 5 residues coordinate sn-glycerol 3-phosphate: Lys194, Asp247, Ser257, Arg258, and Asn259. Lys194 acts as the Proton acceptor in catalysis. Arg258 provides a ligand contact to NADPH. Residues Val282 and Glu284 each coordinate NADPH.

The protein belongs to the NAD-dependent glycerol-3-phosphate dehydrogenase family.

The protein localises to the cytoplasm. It catalyses the reaction sn-glycerol 3-phosphate + NAD(+) = dihydroxyacetone phosphate + NADH + H(+). The catalysed reaction is sn-glycerol 3-phosphate + NADP(+) = dihydroxyacetone phosphate + NADPH + H(+). Its pathway is membrane lipid metabolism; glycerophospholipid metabolism. Functionally, catalyzes the reduction of the glycolytic intermediate dihydroxyacetone phosphate (DHAP) to sn-glycerol 3-phosphate (G3P), the key precursor for phospholipid synthesis. The chain is Glycerol-3-phosphate dehydrogenase [NAD(P)+] from Streptococcus pneumoniae (strain P1031).